The chain runs to 146 residues: Hemoglobin subunit beta-1/2 (146 aa).

The Globin domain occupies 2–146 (EWTDKERSII…VVSALGKQYH (145 aa)). 2 residues coordinate heme b: histidine 63 and histidine 92.

This sequence belongs to the globin family. As to quaternary structure, hb1 is a heterotetramer of two alpha-1 chains and two beta chains. Hb2 is a heterotetramer of two alpha-2 chains and two beta chains. Red blood cells.

In terms of biological role, involved in oxygen transport from gills to the various peripheral tissues. This is Hemoglobin subunit beta-1/2 from Trematomus newnesi (Dusky notothen).